The primary structure comprises 514 residues: Peptide chain release factor 3 (514 aa).

Positions K8–H268 constitute a tr-type G domain. GTP contacts are provided by residues S17–T24, D85–H89, and N139–D142.

It belongs to the TRAFAC class translation factor GTPase superfamily. Classic translation factor GTPase family. PrfC subfamily.

The protein localises to the cytoplasm. Its function is as follows. Increases the formation of ribosomal termination complexes and stimulates activities of RF-1 and RF-2. It binds guanine nucleotides and has strong preference for UGA stop codons. It may interact directly with the ribosome. The stimulation of RF-1 and RF-2 is significantly reduced by GTP and GDP, but not by GMP. The polypeptide is Peptide chain release factor 3 (Streptococcus uberis (strain ATCC BAA-854 / 0140J)).